The following is a 201-amino-acid chain: Recombination protein RecR (201 aa).

The C4-type zinc-finger motif lies at 57 to 72 (CKYCRTFTEQEQCTIC). Residues 81 to 176 (GQICVVESPA…TASRIAHGVP (96 aa)) enclose the Toprim domain.

The protein belongs to the RecR family.

Its function is as follows. May play a role in DNA repair. It seems to be involved in an RecBC-independent recombinational process of DNA repair. It may act with RecF and RecO. This chain is Recombination protein RecR, found in Photorhabdus laumondii subsp. laumondii (strain DSM 15139 / CIP 105565 / TT01) (Photorhabdus luminescens subsp. laumondii).